A 305-amino-acid polypeptide reads, in one-letter code: UDP-3-O-acyl-N-acetylglucosamine deacetylase (305 aa).

Positions 79, 238, and 242 each coordinate Zn(2+). Residue His265 is the Proton donor of the active site.

Belongs to the LpxC family. It depends on Zn(2+) as a cofactor.

The catalysed reaction is a UDP-3-O-[(3R)-3-hydroxyacyl]-N-acetyl-alpha-D-glucosamine + H2O = a UDP-3-O-[(3R)-3-hydroxyacyl]-alpha-D-glucosamine + acetate. Its pathway is glycolipid biosynthesis; lipid IV(A) biosynthesis; lipid IV(A) from (3R)-3-hydroxytetradecanoyl-[acyl-carrier-protein] and UDP-N-acetyl-alpha-D-glucosamine: step 2/6. Catalyzes the hydrolysis of UDP-3-O-myristoyl-N-acetylglucosamine to form UDP-3-O-myristoylglucosamine and acetate, the committed step in lipid A biosynthesis. In Haemophilus influenzae (strain PittGG), this protein is UDP-3-O-acyl-N-acetylglucosamine deacetylase.